The following is a 129-amino-acid chain: Small ribosomal subunit protein uS11 (129 aa).

It belongs to the universal ribosomal protein uS11 family. Part of the 30S ribosomal subunit. Interacts with proteins S7 and S18. Binds to IF-3.

Located on the platform of the 30S subunit, it bridges several disparate RNA helices of the 16S rRNA. Forms part of the Shine-Dalgarno cleft in the 70S ribosome. The polypeptide is Small ribosomal subunit protein uS11 (Hyphomonas neptunium (strain ATCC 15444)).